The sequence spans 185 residues: Anaphase-promoting complex subunit 10 (185 aa).

Thr-2 is modified (N-acetylthreonine). The DOC domain maps to 2-185 (TTPNKTPPGA…IDFMMYRSIR (184 aa)). Lys-169 is modified (N6-acetyllysine).

It belongs to the APC10 family. The mammalian APC/C is composed at least of 14 distinct subunits ANAPC1, ANAPC2, CDC27/APC3, ANAPC4, ANAPC5, CDC16/APC6, ANAPC7, CDC23/APC8, ANAPC10, ANAPC11, CDC26/APC12, ANAPC13, ANAPC15 and ANAPC16 that assemble into a complex of at least 19 chains with a combined molecular mass of around 1.2 MDa; APC/C interacts with FZR1 and FBXO5. The C-terminus of APC10 binds to CDC27/APC3. Interacts with PIWIL1; interaction only takes place when PIWIL1 binds piRNA. Interacts with FBXO43; the interaction is direct.

Its pathway is protein modification; protein ubiquitination. Functionally, component of the anaphase promoting complex/cyclosome (APC/C), a cell cycle-regulated E3 ubiquitin ligase that controls progression through mitosis and the G1 phase of the cell cycle. The APC/C complex acts by mediating ubiquitination and subsequent degradation of target proteins: it mainly mediates the formation of 'Lys-11'-linked polyubiquitin chains and, to a lower extent, the formation of 'Lys-48'- and 'Lys-63'-linked polyubiquitin chains. The APC/C complex catalyzes assembly of branched 'Lys-11'-/'Lys-48'-linked branched ubiquitin chains on target proteins. This chain is Anaphase-promoting complex subunit 10 (ANAPC10), found in Bos taurus (Bovine).